A 610-amino-acid chain; its full sequence is Elongation factor 4 (610 aa).

A tr-type G domain is found at 11–193 (EKIRNFSIIA…QIVEKVPAPT (183 aa)). GTP-binding positions include 23 to 28 (DHGKST) and 140 to 143 (NKID).

This sequence belongs to the TRAFAC class translation factor GTPase superfamily. Classic translation factor GTPase family. LepA subfamily.

The protein resides in the cell membrane. It carries out the reaction GTP + H2O = GDP + phosphate + H(+). Functionally, required for accurate and efficient protein synthesis under certain stress conditions. May act as a fidelity factor of the translation reaction, by catalyzing a one-codon backward translocation of tRNAs on improperly translocated ribosomes. Back-translocation proceeds from a post-translocation (POST) complex to a pre-translocation (PRE) complex, thus giving elongation factor G a second chance to translocate the tRNAs correctly. Binds to ribosomes in a GTP-dependent manner. This Streptococcus pyogenes serotype M3 (strain ATCC BAA-595 / MGAS315) protein is Elongation factor 4.